We begin with the raw amino-acid sequence, 329 residues long: Malate dehydrogenase (329 aa).

12-18 (GAAGQIG) lines the NAD(+) pocket. Substrate-binding residues include Arg95 and Arg101. Residues Asn108, Gln115, and 132–134 (VGN) contribute to the NAD(+) site. Substrate is bound by residues Asn134 and Arg165. His190 (proton acceptor) is an active-site residue.

This sequence belongs to the LDH/MDH superfamily. MDH type 2 family.

It carries out the reaction (S)-malate + NAD(+) = oxaloacetate + NADH + H(+). Its function is as follows. Catalyzes the reversible oxidation of malate to oxaloacetate. The sequence is that of Malate dehydrogenase from Polynucleobacter necessarius subsp. necessarius (strain STIR1).